The following is a 195-amino-acid chain: Shikimate kinase (195 aa).

Residue 30 to 35 (GAGKTA) coordinates ATP. Residue T34 coordinates Mg(2+). 3 residues coordinate substrate: D52, R76, and G98. Residue R136 coordinates ATP. R155 provides a ligand contact to substrate.

Belongs to the shikimate kinase family. As to quaternary structure, monomer. Mg(2+) is required as a cofactor.

The protein resides in the cytoplasm. It carries out the reaction shikimate + ATP = 3-phosphoshikimate + ADP + H(+). The protein operates within metabolic intermediate biosynthesis; chorismate biosynthesis; chorismate from D-erythrose 4-phosphate and phosphoenolpyruvate: step 5/7. Catalyzes the specific phosphorylation of the 3-hydroxyl group of shikimic acid using ATP as a cosubstrate. This is Shikimate kinase from Ruegeria pomeroyi (strain ATCC 700808 / DSM 15171 / DSS-3) (Silicibacter pomeroyi).